We begin with the raw amino-acid sequence, 890 residues long: Putative RNA-binding protein 15B (890 aa).

The tract at residues 1-133 (MKRQSERDSS…AEPACPGSSA (133 aa)) is disordered. A compositionally biased stretch (low complexity) spans 10–20 (SPSGRGSSSSA). Composition is skewed to basic and acidic residues over residues 22-34 (RPREREREAEAGG) and 66-78 (GHRDGRGTGDANH). A compositionally biased stretch (gly residues) spans 86–99 (SGSGAGGGGRGGKA). 2 positions are modified to phosphoserine: Ser109 and Ser113. Residues 113–124 (SPLPPPPPPPGA) are compositionally biased toward pro residues. The RRM 1 domain maps to 139–219 (KTLLISSLSP…RPLKVEPVYL (81 aa)). A Glycyl lysine isopeptide (Lys-Gly) (interchain with G-Cter in SUMO2) cross-link involves residue Lys213. The interval 219 to 253 (LRGGGGSSRRSSSSSAAASTPPPGPPAPADPLGYL) is disordered. A compositionally biased stretch (low complexity) spans 226–237 (SRRSSSSSAAAS). The segment covering 238–247 (TPPPGPPAPA) has biased composition (pro residues). Phosphoserine is present on residues Ser265 and Ser267. RRM domains follow at residues 337–414 (RNLF…YGKA) and 418–492 (TRLW…FAKA). Thr532 is modified (phosphothreonine). The tract at residues 547–705 (EGDWTSPSKS…KPLEEPKHET (159 aa)) is disordered. Phosphoserine occurs at positions 552, 556, and 562. Composition is skewed to basic and acidic residues over residues 573–616 (RSGE…ERSR) and 626–646 (RGSDRTPERSRKENHSSEGTK). Residues 593–597 (RRKRR) carry the Nuclear localization signal motif. Over residues 647-657 (ESSSNSLSNSR) the composition is skewed to low complexity. Positions 671–703 (EAADSSHGKKARDSERNHRTTEAEPKPLEEPKH) are enriched in basic and acidic residues. Lys702 is covalently cross-linked (Glycyl lysine isopeptide (Lys-Gly) (interchain with G-Cter in SUMO2)). The SPOC domain maps to 711–889 (LSEYAQTLQL…HMVIVIVRDT (179 aa)). Residues 722-890 (WNGLLVLKNS…MVIVIVRDTA (169 aa)) are interaction with Epstein-Barr virus BMLF1.

It belongs to the RRM Spen family. As to quaternary structure, component of the WMM complex, a N6-methyltransferase complex composed of a catalytic subcomplex, named MAC, and of an associated subcomplex, named MACOM. The MAC subcomplex is composed of METTL3 and METTL14. The MACOM subcomplex is composed of WTAP, ZC3H13, CBLL1/HAKAI, VIRMA, and, in some cases of RBM15 (RBM15 or RBM15B). May interact with NCOR2. Interacts with NXF1, the interaction is required to promote mRNA export. (Microbial infection) Interacts (via the SPOC domain) with Epstein-Barr virus BMLF1 (via the N-terminus); the interaction is direct. In terms of tissue distribution, ubiquitously expressed.

It is found in the nucleus. It localises to the nucleoplasm. Its subcellular location is the nucleus speckle. The protein localises to the nucleus envelope. Functionally, RNA-binding protein that acts as a key regulator of N6-methyladenosine (m6A) methylation of RNAs, thereby regulating different processes, such as alternative splicing of mRNAs and X chromosome inactivation mediated by Xist RNA. Associated component of the WMM complex, a complex that mediates N6-methyladenosine (m6A) methylation of RNAs, a modification that plays a role in the efficiency of mRNA splicing and RNA processing. Plays a key role in m6A methylation, possibly by binding target RNAs and recruiting the WMM complex. Involved in random X inactivation mediated by Xist RNA: acts by binding Xist RNA and recruiting the WMM complex, which mediates m6A methylation, leading to target YTHDC1 reader on Xist RNA and promoting transcription repression activity of Xist. Functions in the regulation of alternative or illicit splicing, possibly by regulating m6A methylation. Inhibits pre-mRNA splicing. Also functions as a mRNA export factor by acting as a cofactor for the nuclear export receptor NXF1. The protein is Putative RNA-binding protein 15B of Homo sapiens (Human).